The primary structure comprises 353 residues: 4-hydroxy-3-methylbut-2-en-1-yl diphosphate synthase (flavodoxin) (353 aa).

[4Fe-4S] cluster contacts are provided by Cys268, Cys271, Cys303, and Glu310.

It belongs to the IspG family. Requires [4Fe-4S] cluster as cofactor.

The catalysed reaction is (2E)-4-hydroxy-3-methylbut-2-enyl diphosphate + oxidized [flavodoxin] + H2O + 2 H(+) = 2-C-methyl-D-erythritol 2,4-cyclic diphosphate + reduced [flavodoxin]. Its pathway is isoprenoid biosynthesis; isopentenyl diphosphate biosynthesis via DXP pathway; isopentenyl diphosphate from 1-deoxy-D-xylulose 5-phosphate: step 5/6. Converts 2C-methyl-D-erythritol 2,4-cyclodiphosphate (ME-2,4cPP) into 1-hydroxy-2-methyl-2-(E)-butenyl 4-diphosphate. The chain is 4-hydroxy-3-methylbut-2-en-1-yl diphosphate synthase (flavodoxin) from Ruminiclostridium cellulolyticum (strain ATCC 35319 / DSM 5812 / JCM 6584 / H10) (Clostridium cellulolyticum).